The primary structure comprises 280 residues: MAIRKYKPTTPGRRQSSVSGFDELTRSTPEKSLLRPLHKTGGRNVHGHITTRHKGGGHKRQYRLIDFRRNDKDGVPAKVAHIEYDPNRTANIALLHYFDGEKRYIIAPRNLKQGTVVESGANADIKVGNNLPLRNIPTGTTIHAVELKPGGGAKLARSAGSSIQLLGKEGKYAILRMPSTEIRRVDARCRATVGEVGNADQINIRWGKAGRMRWKGVRPTVRGVVMNPVDHPHGGGEGKSSGGRHPVSPWGQPEGRTRKPNRPSDGLIVRRRRSNKNKKR.

Disordered regions lie at residues 1 to 59 (MAIR…GGHK) and 223 to 280 (GVVM…NKKR). The span at 23–33 (ELTRSTPEKSL) shows a compositional bias: basic and acidic residues. Composition is skewed to basic residues over residues 36-59 (PLHK…GGHK) and 269-280 (VRRRRSNKNKKR).

It belongs to the universal ribosomal protein uL2 family. In terms of assembly, part of the 50S ribosomal subunit. Forms a bridge to the 30S subunit in the 70S ribosome.

One of the primary rRNA binding proteins. Required for association of the 30S and 50S subunits to form the 70S ribosome, for tRNA binding and peptide bond formation. It has been suggested to have peptidyltransferase activity; this is somewhat controversial. Makes several contacts with the 16S rRNA in the 70S ribosome. The polypeptide is Large ribosomal subunit protein uL2 (Corynebacterium kroppenstedtii (strain DSM 44385 / JCM 11950 / CIP 105744 / CCUG 35717)).